Here is a 437-residue protein sequence, read N- to C-terminus: GTPase Der (437 aa).

EngA-type G domains follow at residues 3 to 167 (NLVA…KKES) and 176 to 352 (PRFA…ENRM). Residues 9–16 (GRPNVGKS), 56–60 (DTGGW), 119–122 (NKTD), 182–189 (GRPNAGKS), 229–233 (DTAGI), and 294–297 (NKWD) contribute to the GTP site. The 85-residue stretch at 353 to 437 (IKIPTARLNE…TPINIYIRQK (85 aa)) folds into the KH-like domain.

It belongs to the TRAFAC class TrmE-Era-EngA-EngB-Septin-like GTPase superfamily. EngA (Der) GTPase family. In terms of assembly, associates with the 50S ribosomal subunit.

Its function is as follows. GTPase that plays an essential role in the late steps of ribosome biogenesis. This chain is GTPase Der, found in Bacteroides fragilis (strain ATCC 25285 / DSM 2151 / CCUG 4856 / JCM 11019 / LMG 10263 / NCTC 9343 / Onslow / VPI 2553 / EN-2).